A 406-amino-acid chain; its full sequence is Phosphopentomutase (406 aa).

6 residues coordinate Mn(2+): aspartate 10, aspartate 305, histidine 310, aspartate 346, histidine 347, and histidine 358.

Belongs to the phosphopentomutase family. Requires Mn(2+) as cofactor.

It is found in the cytoplasm. It carries out the reaction 2-deoxy-alpha-D-ribose 1-phosphate = 2-deoxy-D-ribose 5-phosphate. The catalysed reaction is alpha-D-ribose 1-phosphate = D-ribose 5-phosphate. It functions in the pathway carbohydrate degradation; 2-deoxy-D-ribose 1-phosphate degradation; D-glyceraldehyde 3-phosphate and acetaldehyde from 2-deoxy-alpha-D-ribose 1-phosphate: step 1/2. Its function is as follows. Isomerase that catalyzes the conversion of deoxy-ribose 1-phosphate (dRib-1-P) and ribose 1-phosphate (Rib-1-P) to deoxy-ribose 5-phosphate (dRib-5-P) and ribose 5-phosphate (Rib-5-P), respectively. In Sinorhizobium fredii (strain NBRC 101917 / NGR234), this protein is Phosphopentomutase.